Consider the following 157-residue polypeptide: Crossover junction endodeoxyribonuclease RuvC (157 aa).

Active-site residues include Asp-7, Glu-66, and Asp-139. The Mg(2+) site is built by Asp-7, Glu-66, and Asp-139.

It belongs to the RuvC family. In terms of assembly, homodimer which binds Holliday junction (HJ) DNA. The HJ becomes 2-fold symmetrical on binding to RuvC with unstacked arms; it has a different conformation from HJ DNA in complex with RuvA. In the full resolvosome a probable DNA-RuvA(4)-RuvB(12)-RuvC(2) complex forms which resolves the HJ. The cofactor is Mg(2+).

The protein localises to the cytoplasm. The enzyme catalyses Endonucleolytic cleavage at a junction such as a reciprocal single-stranded crossover between two homologous DNA duplexes (Holliday junction).. The RuvA-RuvB-RuvC complex processes Holliday junction (HJ) DNA during genetic recombination and DNA repair. Endonuclease that resolves HJ intermediates. Cleaves cruciform DNA by making single-stranded nicks across the HJ at symmetrical positions within the homologous arms, yielding a 5'-phosphate and a 3'-hydroxyl group; requires a central core of homology in the junction. The consensus cleavage sequence is 5'-(A/T)TT(C/G)-3'. Cleavage occurs on the 3'-side of the TT dinucleotide at the point of strand exchange. HJ branch migration catalyzed by RuvA-RuvB allows RuvC to scan DNA until it finds its consensus sequence, where it cleaves and resolves the cruciform DNA. The protein is Crossover junction endodeoxyribonuclease RuvC of Campylobacter curvus (strain 525.92).